The sequence spans 157 residues: Crossover junction endodeoxyribonuclease RuvC (157 aa).

Residues Asp7, Glu67, and Asp139 contribute to the active site. Mg(2+)-binding residues include Asp7, Glu67, and Asp139.

It belongs to the RuvC family. In terms of assembly, homodimer which binds Holliday junction (HJ) DNA. The HJ becomes 2-fold symmetrical on binding to RuvC with unstacked arms; it has a different conformation from HJ DNA in complex with RuvA. In the full resolvosome a probable DNA-RuvA(4)-RuvB(12)-RuvC(2) complex forms which resolves the HJ. The cofactor is Mg(2+).

The protein localises to the cytoplasm. It catalyses the reaction Endonucleolytic cleavage at a junction such as a reciprocal single-stranded crossover between two homologous DNA duplexes (Holliday junction).. The RuvA-RuvB-RuvC complex processes Holliday junction (HJ) DNA during genetic recombination and DNA repair. Endonuclease that resolves HJ intermediates. Cleaves cruciform DNA by making single-stranded nicks across the HJ at symmetrical positions within the homologous arms, yielding a 5'-phosphate and a 3'-hydroxyl group; requires a central core of homology in the junction. The consensus cleavage sequence is 5'-(A/T)TT(C/G)-3'. Cleavage occurs on the 3'-side of the TT dinucleotide at the point of strand exchange. HJ branch migration catalyzed by RuvA-RuvB allows RuvC to scan DNA until it finds its consensus sequence, where it cleaves and resolves the cruciform DNA. This chain is Crossover junction endodeoxyribonuclease RuvC, found in Prochlorococcus marinus subsp. pastoris (strain CCMP1986 / NIES-2087 / MED4).